Consider the following 673-residue polypeptide: Probable multidrug resistance ABC transporter ATP-binding/permease protein YheH (673 aa).

Transmembrane regions (helical) follow at residues 18–38, 146–166, 223–243, 245–265, and 347–367; these read LITA…GPFI, IKGM…SVFF, LYVT…GIFT, LFLL…IIWL, and LAFV…AGIV. An ABC transmembrane type-1 domain is found at 18–398; that stretch reads LITAVLLLTV…IVNQFSKLEL (381 aa). In terms of domain architecture, ABC transporter spans 430–664; the sequence is VEFRDVSFAY…EGQYYQMYEL (235 aa). 463–470 lines the ATP pocket; it reads GHTGSGKS.

It belongs to the ABC transporter superfamily. Heterodimer composed of YheH and YheI.

Its subcellular location is the cell membrane. Inhibited by ortho-vanadate. Its function is as follows. Involved in the transport of four structurally unrelated drugs, including doxorubicin and mitoxantrone. Transmembrane domains (TMD) form a pore in the membrane and the ATP-binding domain (NBD) is responsible for energy generation. This Bacillus subtilis (strain 168) protein is Probable multidrug resistance ABC transporter ATP-binding/permease protein YheH (yheH).